The following is a 777-amino-acid chain: Androgen receptor (777 aa).

The modulating stretch occupies residues 1-416 (MEVHIGLGGV…IDYYFPPQKP (416 aa)). Disordered regions lie at residues 53–95 (CVHP…QAPQ), 110–132 (GEQGGMPEEGNSESASKEGYPES), and 205–241 (RRAGQSTYSAGKAPEDGSSLPTEDKEQPCTDMALSEP). 2 NR C4-type zinc fingers span residues 417-434 (CLSCEDEASGCHYEALTC) and 453-472 (CASRNDCTIDKFRRKNCPSC). Positions 417-489 (CLSCEDEASG…AGMTLGARKL (73 aa)) form a DNA-binding region, nuclear receptor. In terms of domain architecture, NR LBD spans 526–757 (SCQPIFLNVL…DFPEMMSEII (232 aa)). Residues Asn563, Arg610, and Thr735 each coordinate 17beta-hydroxy-5alpha-androstan-3-one.

Belongs to the nuclear hormone receptor family. NR3 subfamily. Binds DNA as a homodimer. Interacts via the ligand-binding domain with LXXLL and FXXLF motifs from coactivator proteins. Interacts (via ligand-binding domain) with TRIM68. Detected in somatic Leydig and Sertoli cells in testis with high level expression. Also detected at lower expression levels in forebrain and heart.

Its subcellular location is the nucleus. It is found in the cytoplasm. Functionally, steroid hormone receptors are ligand-activated transcription factors that regulate eukaryotic gene expression and affect cellular proliferation and differentiation in target tissues. Transcription factor activity is modulated by bound coactivator and corepressor proteins. This is Androgen receptor (ar) from Aquarana catesbeiana (American bullfrog).